The sequence spans 550 residues: Membrane protein insertase YidC (550 aa).

Transmembrane regions (helical) follow at residues 6-26, 333-353, 356-376, 430-450, 469-489, and 504-524; these read LVLF…WLKQ, VVDY…LSWI, VVGN…LMFF, LPIL…LGSV, PYFI…KLNP, and PVIF…YWVV.

The protein belongs to the OXA1/ALB3/YidC family. Type 1 subfamily. Interacts with the Sec translocase complex via SecD. Specifically interacts with transmembrane segments of nascent integral membrane proteins during membrane integration.

Its subcellular location is the cell inner membrane. Required for the insertion and/or proper folding and/or complex formation of integral membrane proteins into the membrane. Involved in integration of membrane proteins that insert both dependently and independently of the Sec translocase complex, as well as at least some lipoproteins. Aids folding of multispanning membrane proteins. In Aromatoleum aromaticum (strain DSM 19018 / LMG 30748 / EbN1) (Azoarcus sp. (strain EbN1)), this protein is Membrane protein insertase YidC.